We begin with the raw amino-acid sequence, 426 residues long: Enolase (426 aa).

Gln163 serves as a coordination point for (2R)-2-phosphoglycerate. Residue Glu205 is the Proton donor of the active site. The Mg(2+) site is built by Asp242, Glu285, and Asp312. 4 residues coordinate (2R)-2-phosphoglycerate: Lys337, Arg366, Ser367, and Lys388. Lys337 serves as the catalytic Proton acceptor.

This sequence belongs to the enolase family. Requires Mg(2+) as cofactor.

It localises to the cytoplasm. The protein localises to the secreted. It is found in the cell surface. It carries out the reaction (2R)-2-phosphoglycerate = phosphoenolpyruvate + H2O. The protein operates within carbohydrate degradation; glycolysis; pyruvate from D-glyceraldehyde 3-phosphate: step 4/5. Functionally, catalyzes the reversible conversion of 2-phosphoglycerate (2-PG) into phosphoenolpyruvate (PEP). It is essential for the degradation of carbohydrates via glycolysis. The chain is Enolase from Nitrobacter winogradskyi (strain ATCC 25391 / DSM 10237 / CIP 104748 / NCIMB 11846 / Nb-255).